Consider the following 120-residue polypeptide: MALDTDKIIEELKGASILELNDLVKAIEDEFDVTAAAPVAAAGAADAGAAKSEFDVELTEAGQEKVKVIKAVRDITGLGLKDSKDLVDGAPKNVKEGVSEDEANDIKAKLEEVGATVTLK.

It belongs to the bacterial ribosomal protein bL12 family. As to quaternary structure, homodimer. Part of the ribosomal stalk of the 50S ribosomal subunit. Forms a multimeric L10(L12)X complex, where L10 forms an elongated spine to which 2 to 4 L12 dimers bind in a sequential fashion. Binds GTP-bound translation factors.

Functionally, forms part of the ribosomal stalk which helps the ribosome interact with GTP-bound translation factors. Is thus essential for accurate translation. The chain is Large ribosomal subunit protein bL12 from Lactobacillus helveticus (strain DPC 4571).